Reading from the N-terminus, the 249-residue chain is Transmembrane protein 150C (249 aa).

The Cytoplasmic segment spans residues 1–9 (MDGKKCSVW). A helical membrane pass occupies residues 10 to 30 (MFLPLVFTVFTSAGLWIVYFI). Residues 31-64 (AVEDDKIFPLNSAERKPGVKHAPYISIAGDEPPA) are Extracellular-facing. A helical membrane pass occupies residues 65 to 85 (SCVFSQVMNMAAFLALVVAVL). At 86–97 (RFIQLKPKVLNP) the chain is on the cytoplasmic side. Residues 98-118 (WLNISGLVALCLASFGMTLLG) form a helical membrane-spanning segment. At 119–130 (NFQLTNDEEIHN) the chain is on the extracellular side. A helical membrane pass occupies residues 131-151 (VGTSLTFGFGTLTCWIQAALT). At 152-168 (LKVNIKNEGRKVGIPRV) the chain is on the cytoplasmic side. The chain crosses the membrane as a helical span at residues 169–189 (ILSASITLCVVLYFILMAQGI). Topologically, residues 190–192 (HMY) are extracellular. Residues 193-213 (AARVQWGLVMCFLSYFGTFAV) traverse the membrane as a helical segment. Over 214–249 (EFRHYRYEIVCSEYQENFLSFSESLSEASEYQTDQV) the chain is Cytoplasmic.

Belongs to the DRAM/TMEM150 family.

Its subcellular location is the cell membrane. The protein localises to the lysosome membrane. The catalysed reaction is Ca(2+)(in) = Ca(2+)(out). It carries out the reaction Na(+)(in) = Na(+)(out). It catalyses the reaction K(+)(in) = K(+)(out). The enzyme catalyses Mg(2+)(in) = Mg(2+)(out). In terms of biological role, nonselective cationic channel with high permeability to Ca(2+). Component of a mechanosensitive cation channel. Confers mechanically activated (MA) currents with slow inactivation kinetics. May contribute to proprioception. This Bos taurus (Bovine) protein is Transmembrane protein 150C (TMEM150C).